Reading from the N-terminus, the 1053-residue chain is Focal adhesion kinase 1 (1053 aa).

Positions 1–27 (MAAAYLDPNLNHTPSSSAKTHLGTGME) are disordered. The segment covering 10–19 (LNHTPSSSAK) has biased composition (polar residues). The region spanning 35 to 355 (RVLKVFHYFE…GYCRLVNGAT (321 aa)) is the FERM domain. Residue Y397 is modified to Phosphotyrosine; by autocatalysis. The residue at position 407 (Y407) is a Phosphotyrosine. Positions 422–680 (IELGRCIGEG…ELKAQLSTIL (259 aa)) constitute a Protein kinase domain. Residues 428 to 434 (IGEGQFG), K454, and 500 to 502 (ELC) each bind ATP. The active-site Proton acceptor is D546. Phosphotyrosine; by SRC is present on residues Y576 and Y577. The span at 686 to 697 (QQEERMRMESRR) shows a compositional bias: basic and acidic residues. Disordered regions lie at residues 686–741 (QQEE…QPNH) and 843–892 (RGSI…LASL). Y863 is modified (phosphotyrosine). At S911 the chain carries Phosphoserine. Phosphotyrosine is present on Y926.

The protein belongs to the protein kinase superfamily. Tyr protein kinase family. FAK subfamily. Interacts with ARHGAP26, GRB7, DCC, PIK3R1, PXN and SRC. Interacts with the ARP2/3 complex. Post-translationally, phosphorylated on tyrosine residues upon activation, e.g. upon integrin signaling. Tyr-397 is the major autophosphorylation site, but other kinases can also phosphorylate this residue. Phosphorylation at Tyr-397 promotes interaction with SRC and SRC family members, leading to phosphorylation at Tyr-576, Tyr-577 and at additional tyrosine residues. Isoform 2 is phosphorylated on serine or threonine residues, but apparently not on tyrosine residues.

Its subcellular location is the cell junction. It localises to the focal adhesion. The protein resides in the cell membrane. It is found in the cytoplasm. The protein localises to the perinuclear region. Its subcellular location is the cell cortex. It localises to the cytoskeleton. The protein resides in the microtubule organizing center. It is found in the centrosome. The protein localises to the nucleus. Its subcellular location is the cilium basal body. The catalysed reaction is L-tyrosyl-[protein] + ATP = O-phospho-L-tyrosyl-[protein] + ADP + H(+). Subject to autoinhibition, mediated by interactions between the FERM domain and the kinase domain. Activated by autophosphorylation at Tyr-397. This promotes interaction with SRC and phosphorylation at Tyr-576 and Tyr-577 in the kinase activation loop. Phosphorylation at Tyr-576 and Tyr-577 is required for maximal kinase activity. Inhibited by TAE226. In terms of biological role, non-receptor protein-tyrosine kinase that plays an essential role in regulating cell migration, adhesion, spreading, reorganization of the actin cytoskeleton, formation and disassembly of focal adhesions and cell protrusions, cell cycle progression, cell proliferation and apoptosis. Required for early embryonic development, embryonic angiogenesis, normal cardiomyocyte migration and proliferation, and normal heart development. Regulates axon growth and neuronal cell migration, axon branching and synapse formation; required for normal development of the nervous system. Plays a role in osteogenesis and differentiation of osteoblasts. Functions in integrin signal transduction, but also in signaling downstream of numerous growth factor receptors, G-protein coupled receptors (GPCR), ephrin receptors, netrin receptors and LDL receptors. Forms multisubunit signaling complexes with SRC and SRC family members upon activation; this leads to the phosphorylation of additional tyrosine residues, creating binding sites for scaffold proteins, effectors and substrates. Regulates numerous signaling pathways. Promotes activation of phosphatidylinositol 3-kinase and the AKT1 signaling cascade. Promotes activation of MAPK1/ERK2, MAPK3/ERK1 and the MAP kinase signaling cascade. Promotes localized and transient activation of guanine nucleotide exchange factors (GEFs) and GTPase-activating proteins (GAPs), and thereby modulates the activity of Rho family GTPases. Signaling via CAS family members mediates activation of RAC1. Regulates P53/TP53 activity and stability. Phosphorylates SRC; this increases SRC kinase activity. Isoform 2 (FRNK) does not contain a kinase domain and inhibits PTK2/FAK1 phosphorylation and signaling. In Gallus gallus (Chicken), this protein is Focal adhesion kinase 1 (PTK2).